A 403-amino-acid polypeptide reads, in one-letter code: MARCRMPRWGLLLVLWGSCTFGLPADTGAFRRIFLKKMPSIRESLKERGVDVAGLGAEWNQFTKRLSSGNSTSPVVLTNYLDTQYYGEIGIGTPPQTFKVVFDTGSANLWVPSTRCSPLYTACEIHCLYDSSESSSYMENGTTFTIRYGSGKVKGFLSQDMVTVGGITVTQTFGEVTELPLIPFMLAKFDGVLGMGFPAQAVGGVTPVFDHILSQGVLKEEVFSVYYSRNSHLLGGEVVLGGSDPQYYQGNFHYVSISKTGSWQIKMKGVSVRSATLVCEEGCMVVVDTGASYISGPTSSLRLLMDTLGAQELSTNEYVVNCNQVPTLPDISFHLGGRAYTLTSKDYVLQDPYGNEDLCTLALHGLDVPPPTGPVWVLGASFIRKFYTEFDRHNNRIGFALAR.

An N-terminal signal peptide occupies residues 1–22; the sequence is MARCRMPRWGLLLVLWGSCTFG. Positions 23 to 65 are cleaved as a propeptide — activation peptide; the sequence is LPADTGAFRRIFLKKMPSIRESLKERGVDVAGLGAEWNQFTKR. Residue Asn-70 is glycosylated (N-linked (GlcNAc...) asparagine). Positions 85-400 constitute a Peptidase A1 domain; sequence YYGEIGIGTP…DRHNNRIGFA (316 aa). The active site involves Asp-103. Cys-116 and Cys-123 are disulfide-bonded. Asn-140 is a glycosylation site (N-linked (GlcNAc...) asparagine). Residues Cys-279 and Cys-283 are joined by a disulfide bond. The active site involves Asp-288. Cysteines 322 and 359 form a disulfide.

This sequence belongs to the peptidase A1 family. In terms of assembly, interacts with ATP6AP2.

The protein resides in the secreted. The protein localises to the membrane. The enzyme catalyses Cleavage of Leu-|-Xaa bond in angiotensinogen to generate angiotensin I.. Interaction with ATP6AP2 results in a 5-fold increased efficiency in angiotensinogen processing. Renin is a highly specific endopeptidase, whose only known function is to generate angiotensin I from angiotensinogen in the plasma, initiating a cascade of reactions that produce an elevation of blood pressure and increased sodium retention by the kidney. This chain is Renin (REN), found in Canis lupus familiaris (Dog).